The primary structure comprises 123 residues: Small ribosomal subunit protein uS11 (123 aa).

The protein belongs to the universal ribosomal protein uS11 family. Part of the 30S ribosomal subunit. Interacts with proteins S7 and S18. Binds to IF-3.

Its function is as follows. Located on the platform of the 30S subunit, it bridges several disparate RNA helices of the 16S rRNA. Forms part of the Shine-Dalgarno cleft in the 70S ribosome. The polypeptide is Small ribosomal subunit protein uS11 (Coxiella burnetii (strain CbuK_Q154) (Coxiella burnetii (strain Q154))).